The sequence spans 121 residues: Autophagy-related protein 8f (121 aa).

The Phosphatidylethanolamine amidated glycine moiety is linked to residue G117. A propeptide spans 118 to 121 (removed in mature form); that stretch reads FGSP.

The protein belongs to the ATG8 family. Interacts with ATG4. Interacts with NBR1. Interacts with ATI1 and ATI2. Interacts with SH3P2. In terms of processing, the C-terminal 4 residues are removed by ATG4 to expose Gly-117 at the C-terminus. This Gly-117 forms then a thioester bond with the 'Cys-558' of ATG7 (E1-like activating enzyme) before being transferred to the 'Cys-258' of ATG3 (the specific E2 conjugating enzyme), in order to be finally amidated with phosphatidylethanolamine. This lipid modification anchors ATG8 to autophagosomes. As to expression, constitutively expressed.

Its subcellular location is the cytoplasmic vesicle. It is found in the autophagosome membrane. It localises to the vacuole membrane. The protein resides in the cytoplasm. The protein localises to the cytoskeleton. Ubiquitin-like modifier involved in autophagosomes formation. May mediate the delivery of the autophagosomes to the vacuole via the microtubule cytoskeleton. The sequence is that of Autophagy-related protein 8f (ATG8F) from Arabidopsis thaliana (Mouse-ear cress).